The following is a 227-amino-acid chain: 2-phospho-L-lactate guanylyltransferase (227 aa).

It belongs to the CofC family. As to quaternary structure, homodimer.

The enzyme catalyses (2S)-2-phospholactate + GTP + H(+) = (2S)-lactyl-2-diphospho-5'-guanosine + diphosphate. The protein operates within cofactor biosynthesis; coenzyme F420 biosynthesis. Guanylyltransferase that catalyzes the activation of (2S)-2-phospholactate (2-PL) as (2S)-lactyl-2-diphospho-5'-guanosine, via the condensation of 2-PL with GTP. It is involved in the biosynthesis of coenzyme F420, a hydride carrier cofactor. This Methanocaldococcus sp. (strain FS406-22) protein is 2-phospho-L-lactate guanylyltransferase.